The following is a 134-amino-acid chain: Global transcriptional regulator Spx (134 aa).

Residues C10 and C13 are joined by a disulfide bond.

The protein belongs to the ArsC family. Spx subfamily. As to quaternary structure, interacts with the C-terminal domain of the alpha subunit of the RNAP.

The protein resides in the cytoplasm. In terms of biological role, global transcriptional regulator that plays a key role in stress response and exerts either positive or negative regulation of genes. Acts by interacting with the C-terminal domain of the alpha subunit of the RNA polymerase (RNAP). This interaction can enhance binding of RNAP to the promoter region of target genes and stimulate their transcription, or block interaction of RNAP with activator. This is Global transcriptional regulator Spx from Streptococcus pyogenes serotype M1.